Here is a 702-residue protein sequence, read N- to C-terminus: Methionine--tRNA ligase (702 aa).

Residues P14–H24 carry the 'HIGH' region motif. The Zn(2+) site is built by C146, C149, C159, and C162. Residues K344–S348 carry the 'KMSKS' region motif. K347 lines the ATP pocket. Positions D601–Q702 constitute a tRNA-binding domain.

It belongs to the class-I aminoacyl-tRNA synthetase family. MetG type 1 subfamily. In terms of assembly, homodimer. Zn(2+) is required as a cofactor.

It is found in the cytoplasm. It carries out the reaction tRNA(Met) + L-methionine + ATP = L-methionyl-tRNA(Met) + AMP + diphosphate. Its function is as follows. Is required not only for elongation of protein synthesis but also for the initiation of all mRNA translation through initiator tRNA(fMet) aminoacylation. This Chlorobium phaeovibrioides (strain DSM 265 / 1930) (Prosthecochloris vibrioformis (strain DSM 265)) protein is Methionine--tRNA ligase.